Consider the following 263-residue polypeptide: tRNA pseudouridine synthase A (263 aa).

Residue aspartate 53 is the Nucleophile of the active site. A substrate-binding site is contributed by tyrosine 111. The tract at residues 232-263 (TAPGHGLISGRSNMTNGKLENNKTTNPCVTKY) is disordered. Polar residues predominate over residues 241-263 (GRSNMTNGKLENNKTTNPCVTKY).

This sequence belongs to the tRNA pseudouridine synthase TruA family. In terms of assembly, homodimer.

The enzyme catalyses uridine(38/39/40) in tRNA = pseudouridine(38/39/40) in tRNA. Functionally, formation of pseudouridine at positions 38, 39 and 40 in the anticodon stem and loop of transfer RNAs. The protein is tRNA pseudouridine synthase A of Halalkalibacterium halodurans (strain ATCC BAA-125 / DSM 18197 / FERM 7344 / JCM 9153 / C-125) (Bacillus halodurans).